Reading from the N-terminus, the 166-residue chain is MKVYVIDYHKDDPKKCTGRKLVKLKLAELTRVGRGIILNPFSERTLSINDKDILIKSGITIIDTSWNNTSQNEFKNVRGEHRRLPILFAGNPIHYGIAYKLSSLEALMATLYILDEVKEAIKFSNVVKWGHTFIELNKELLEAYRNKDEEEIKKIEKEIIEKILRK.

S-adenosyl-L-methionine contacts are provided by Thr-17, Ile-62, Leu-84, Tyr-99, and Ser-103.

This sequence belongs to the TDD superfamily. TSR3 family.

The protein localises to the cytoplasm. The enzyme catalyses an N(1)-methylpseudouridine in rRNA + S-adenosyl-L-methionine = N(1)-methyl-N(3)-[(3S)-3-amino-3-carboxypropyl]pseudouridine in rRNA + S-methyl-5'-thioadenosine + H(+). Its function is as follows. Aminocarboxypropyltransferase that catalyzes the aminocarboxypropyl transfer on pseudouridine corresponding to position 914 in M.jannaschii 16S rRNA. It constitutes the last step in biosynthesis of the hypermodified N1-methyl-N3-(3-amino-3-carboxypropyl) pseudouridine (m1acp3-Psi). The polypeptide is 16S rRNA aminocarboxypropyltransferase (Saccharolobus islandicus (strain Y.N.15.51 / Yellowstone #2) (Sulfolobus islandicus)).